The following is a 357-amino-acid chain: N-methyltransferase dtpB (357 aa).

This sequence belongs to the methyltransferase superfamily.

The protein operates within alkaloid biosynthesis. Functionally, N-methyltransferase; part of the gene cluster that mediates the biosynthesis of the dimeric diketopiperazine alkaloid ditryptophenaline. The nonribosomal peptide synthase dtpA accepts L-tryptophan and L-phenylalanine as its substrates and forms the phenylalanyl-tryptophanyl cyclic dipeptide product cyclophenylalanyltryptophenyl. The N-methyltransferase dtpB is responsible for the N-methylation of cyclophenylalanyltryptophenyl to yield cyclo-N-methylphenylalanyltryptophenyl. The cytochrome P450 monooxygenase is responsible not only for pyrroloindole ring formation but also for concurrent dimerization of N-methylphenylalanyltryptophanyl diketopiperazine monomers into a homodimeric product. The sequence is that of N-methyltransferase dtpB from Aspergillus flavus (strain ATCC 200026 / FGSC A1120 / IAM 13836 / NRRL 3357 / JCM 12722 / SRRC 167).